An 868-amino-acid chain; its full sequence is Phospholipase D delta (868 aa).

The C2 domain maps to 1–154 (MAEKVSEDVM…ASGERISGWF (154 aa)). Aspartate 216 provides a ligand contact to Ca(2+). In terms of domain architecture, PLD phosphodiesterase 1 spans 368–403 (TLFTHHQKCVLVDTQAVGNNRKVTAFIGGLDLCDGR). Catalysis depends on residues histidine 373, lysine 375, and aspartate 380. An a 1,2-diacyl-sn-glycero-3-phosphate-binding site is contributed by histidine 373. Positions 409 and 440 each coordinate Ca(2+). Residues glutamine 588 and histidine 718 each contribute to the a 1,2-diacyl-sn-glycero-3-phosphate site. Residues 713 to 740 (FMIYVHAKGMIVDDEYVLMGSANINQRS) form the PLD phosphodiesterase 2 domain. Catalysis depends on residues histidine 718, lysine 720, and aspartate 725. Ca(2+) is bound at residue glutamate 781.

It belongs to the phospholipase D family. C2-PLD subfamily. Interacts with GAPC1 and GAPC2. Increased interaction in the presence of H(2)O(2). Requires Ca(2+) as cofactor. Expressed in roots, leaves, stems, siliques and flowers. Strongly expressed in the vascular tissues of cotyledons and leaves under dehydration stress conditions. Expression is higher in old leaves than in young leaves. Expressed in leaves and guard cells. The isoform 2 may not be present in siliques.

The protein localises to the cell membrane. It carries out the reaction a 1,2-diacyl-sn-glycero-3-phosphocholine + H2O = a 1,2-diacyl-sn-glycero-3-phosphate + choline + H(+). Its activity is regulated as follows. Activated by free oleic acid in a dose-dependent manner and less effectively by other unsaturated fatty acids such as linoleic and linolenic acids. Not activated by the saturated fatty acids stearic and palmitic acids. PIP2 and Ca(2+) stimulate activity by promoting lipid substrate binding to the active site. Activated by H(2)O(2) and by binding to GAPC. In terms of biological role, hydrolyzes glycerol-phospholipids at the terminal phosphodiesteric bond to generate phosphatidic acids (PA). May be involved in PA accumulation in the dehydration stress response and in the transduction of hormonal and environmental signals to the microtubules cytoskeleton. Prefers phosphatidylethanolamine to phosphatidylcholine as substrate. Involved in H(2)O(2) and abscisic acid (ABA)-induced stomatal closure. Involved in nitric oxide (NO) signaling during stomatal closure. Plays a positive role in ABA-promoted senescence. Involved in basal defense and nonhost resistance. The chain is Phospholipase D delta from Arabidopsis thaliana (Mouse-ear cress).